The chain runs to 361 residues: Spermidine/putrescine import ATP-binding protein PotA (361 aa).

The region spanning 7 to 241 is the ABC transporter domain; sequence IEVRNVSKRY…PQHRFVAQFI (235 aa). Residue 43–50 coordinates ATP; it reads GPSGCGKT.

This sequence belongs to the ABC transporter superfamily. Spermidine/putrescine importer (TC 3.A.1.11.1) family. In terms of assembly, the complex is composed of two ATP-binding proteins (PotA), two transmembrane proteins (PotB and PotC) and a solute-binding protein (PotD).

It localises to the cell inner membrane. The catalysed reaction is ATP + H2O + polyamine-[polyamine-binding protein]Side 1 = ADP + phosphate + polyamineSide 2 + [polyamine-binding protein]Side 1.. Functionally, part of the ABC transporter complex PotABCD involved in spermidine/putrescine import. Responsible for energy coupling to the transport system. The protein is Spermidine/putrescine import ATP-binding protein PotA of Pseudomonas fluorescens (strain Pf0-1).